The chain runs to 1225 residues: Structural maintenance of chromosomes protein 1 (1225 aa).

ATP is bound at residue Gly33 to Ser40. Positions Ser173–Asn489 form a coiled coil. The SMC hinge domain occupies Pro527–Leu641. Residues Lys679–Leu1063 are a coiled coil. Residues Lys1057 to Lys1061 carry the Nuclear localization signal motif.

The protein belongs to the SMC family. SMC1 subfamily. Cohesin complexes are composed of the SMC1 and SMC3 heterodimer attached via their SMC hinge domain, MCD1/SCC1 which link them, and IRR1/SCC3, which interacts with MCD1. The cohesin complex also interacts with SCC2, which is required for its association with chromosomes.

It localises to the nucleus. It is found in the chromosome. Its function is as follows. Involved in chromosome cohesion during cell cycle and in DNA repair. Central component of cohesin complex. The cohesin complex is required for the cohesion of sister chromatids after DNA replication. The cohesin complex apparently forms a large proteinaceous ring within which sister chromatids can be trapped. At anaphase, the complex is cleaved and dissociates from chromatin, allowing sister chromatids to segregate. This chain is Structural maintenance of chromosomes protein 1 (SMC1), found in Saccharomyces cerevisiae (strain ATCC 204508 / S288c) (Baker's yeast).